Here is a 174-residue protein sequence, read N- to C-terminus: uncharacterized protein (174 aa).

The region spanning 42 to 174 is the N-acetyltransferase domain; that stretch reads SNTKNINLYE…GVKGMFWYPR (133 aa).

Belongs to the acetyltransferase family. Ycf52 subfamily.

Its subcellular location is the plastid. It localises to the chloroplast. This is an uncharacterized protein from Porphyra purpurea (Red seaweed).